Reading from the N-terminus, the 605-residue chain is YTH domain-containing protein ECT4 (605 aa).

Disordered stretches follow at residues 249 to 274 (GVAS…SNSH) and 357 to 384 (ELNR…QTFD). The segment covering 256 to 274 (KANNNVPATRNQNSSSNSH) has biased composition (polar residues). Over residues 368-383 (KATEEVSSEEVKKQTF) the composition is skewed to basic and acidic residues. The YTH domain maps to 414-551 (AKFFIIKSYS…EQGLKVVKIF (138 aa)). RNA-binding positions include 420–422 (KSY), D426, 436–437 (WA), N469, W493, W498, and W506. The tract at residues 580 to 605 (KQQQSQKQVWEGKTNDEKPGTVDSTM) is disordered.

As to expression, expressed in the shoot apex, at the sites of leaf formation, and in emerging leaves.

It localises to the cytoplasm. Functionally, specifically recognizes and binds N6-methyladenosine (m6A)-containing RNAs, and regulates mRNA stability. M6A is a modification present at internal sites of mRNAs and some non-coding RNAs and plays a role in mRNA stability and processing. Required for the correct timing of leaf formation and normal leaf morphology. The polypeptide is YTH domain-containing protein ECT4 (Arabidopsis thaliana (Mouse-ear cress)).